We begin with the raw amino-acid sequence, 361 residues long: MKDSVIRKLEGLLERNEEVLALLSDPGVISDQERFRALSKEYSQLEDVVTSFKSFQQATEDLEAAKEMASDDDPELKEMAQEEMKEAKSLLEKLEDELQILLLPKDPNDDNNCFIEIRAGAGGDEAAIFAGDLFRMYSKYVESKRWQLEVMNTNEGEHGGFKEVIAKVSGEGVYGQLKFESGGHRVQRVPETESQGRVHTSACTVVVLPEIPESEAIEINKGDLKVDTFRASGAGGQHVNKTDSAIRLTHIPSGIVVECQDQRSQHKNRAQAMSVLTARIQAVEDEKRRSAEESTRRNLVGSGDRSERIRTYNFPQGRVSEHRINLTLYRLNEVMEGELDAILEPLMLENQADMLAALSEE.

Residue Q237 is modified to N5-methylglutamine. The segment covering 285–296 has biased composition (basic and acidic residues); that stretch reads DEKRRSAEESTR. The interval 285–305 is disordered; sequence DEKRRSAEESTRRNLVGSGDR.

This sequence belongs to the prokaryotic/mitochondrial release factor family. Methylated by PrmC. Methylation increases the termination efficiency of RF1.

It is found in the cytoplasm. Peptide chain release factor 1 directs the termination of translation in response to the peptide chain termination codons UAG and UAA. The polypeptide is Peptide chain release factor 1 (Shewanella sediminis (strain HAW-EB3)).